The sequence spans 711 residues: Interferon-induced GTP-binding protein Mx2 (711 aa).

Disordered stretches follow at residues M1–M26 and M62–S88. Over residues S66–P82 the composition is skewed to low complexity. The region spanning D112 to P383 is the Dynamin-type G domain. Positions G122 to S129 are G1 motif. Residue G122–S129 coordinates GTP. The segment at I147–R149 is G2 motif. The interval D221–G224 is G3 motif. GTP contacts are provided by residues D221–I225 and T290–D293. The segment at T290–D293 is G4 motif. The interval K322 to G325 is G5 motif. The GED domain occupies I619–Q710.

Belongs to the TRAFAC class dynamin-like GTPase superfamily. Dynamin/Fzo/YdjA family. As to expression, ubiquitous.

It is found in the cytoplasm. Its subcellular location is the nucleus. Its function is as follows. Interferon-induced dynamin-like GTPase with antiviral activity against influenza virus A (FLUAV). This is Interferon-induced GTP-binding protein Mx2 (MX2) from Sus scrofa (Pig).